We begin with the raw amino-acid sequence, 445 residues long: Chromosomal replication initiator protein DnaA (445 aa).

The domain I, interacts with DnaA modulators stretch occupies residues Met1–Glu72. Residues Glu72–Asn107 are domain II. The interval Gln108–Ser324 is domain III, AAA+ region. Residues Gly152, Gly154, Lys155, and Thr156 each coordinate ATP. Residues Lys325–Ser445 form a domain IV, binds dsDNA region.

The protein belongs to the DnaA family. Oligomerizes as a right-handed, spiral filament on DNA at oriC.

It localises to the cytoplasm. Functionally, plays an essential role in the initiation and regulation of chromosomal replication. ATP-DnaA binds to the origin of replication (oriC) to initiate formation of the DNA replication initiation complex once per cell cycle. Binds the DnaA box (a 9 base pair repeat at the origin) and separates the double-stranded (ds)DNA. Forms a right-handed helical filament on oriC DNA; dsDNA binds to the exterior of the filament while single-stranded (ss)DNA is stabiized in the filament's interior. The ATP-DnaA-oriC complex binds and stabilizes one strand of the AT-rich DNA unwinding element (DUE), permitting loading of DNA polymerase. After initiation quickly degrades to an ADP-DnaA complex that is not apt for DNA replication. Binds acidic phospholipids. The sequence is that of Chromosomal replication initiator protein DnaA from Macrococcus caseolyticus (strain JCSC5402) (Macrococcoides caseolyticum).